The sequence spans 233 residues: Octanoyltransferase (233 aa).

The BPL/LPL catalytic domain occupies Asp36–Thr211. Substrate contacts are provided by residues Arg75–His82, Ser142–Gly144, and Gly155–Ala157. Cys173 serves as the catalytic Acyl-thioester intermediate.

It belongs to the LipB family.

The protein localises to the cytoplasm. It catalyses the reaction octanoyl-[ACP] + L-lysyl-[protein] = N(6)-octanoyl-L-lysyl-[protein] + holo-[ACP] + H(+). The protein operates within protein modification; protein lipoylation via endogenous pathway; protein N(6)-(lipoyl)lysine from octanoyl-[acyl-carrier-protein]: step 1/2. Functionally, catalyzes the transfer of endogenously produced octanoic acid from octanoyl-acyl-carrier-protein onto the lipoyl domains of lipoate-dependent enzymes. Lipoyl-ACP can also act as a substrate although octanoyl-ACP is likely to be the physiological substrate. The polypeptide is Octanoyltransferase (Yersinia pestis bv. Antiqua (strain Antiqua)).